Reading from the N-terminus, the 106-residue chain is Thioredoxin-like protein YdbP (106 aa).

A Thioredoxin domain is found at Met1–Ser106. Residues Cys29 and Cys32 are joined by a disulfide bond.

It belongs to the thioredoxin family.

Participates in various redox reactions through the reversible oxidation of its active center dithiol to a disulfide and catalyzes dithiol-disulfide exchange reactions. This Bacillus subtilis (strain 168) protein is Thioredoxin-like protein YdbP (ydbP).